A 480-amino-acid polypeptide reads, in one-letter code: Acetyl-coenzyme A carboxylase carboxyl transferase subunit beta, chloroplastic (480 aa).

The CoA carboxyltransferase N-terminal domain occupies 212–480; the sequence is LWVQCENCYG…FPLNQINKYK (269 aa). The Zn(2+) site is built by Cys216, Cys219, Cys235, and Cys238. The C4-type zinc finger occupies 216 to 238; it reads CENCYGLNYQKFFRSKMNICERC.

The protein belongs to the AccD/PCCB family. As to quaternary structure, acetyl-CoA carboxylase is a heterohexamer composed of biotin carboxyl carrier protein, biotin carboxylase and 2 subunits each of ACCase subunit alpha and ACCase plastid-coded subunit beta (accD). Zn(2+) serves as cofactor.

The protein localises to the plastid. It localises to the chloroplast stroma. The catalysed reaction is N(6)-carboxybiotinyl-L-lysyl-[protein] + acetyl-CoA = N(6)-biotinyl-L-lysyl-[protein] + malonyl-CoA. It participates in lipid metabolism; malonyl-CoA biosynthesis; malonyl-CoA from acetyl-CoA: step 1/1. Component of the acetyl coenzyme A carboxylase (ACC) complex. Biotin carboxylase (BC) catalyzes the carboxylation of biotin on its carrier protein (BCCP) and then the CO(2) group is transferred by the transcarboxylase to acetyl-CoA to form malonyl-CoA. The polypeptide is Acetyl-coenzyme A carboxylase carboxyl transferase subunit beta, chloroplastic (Illicium oligandrum (Star anise)).